The sequence spans 474 residues: 3-isopropylmalate dehydratase large subunit (474 aa).

3 residues coordinate [4Fe-4S] cluster: Cys350, Cys415, and Cys418.

The protein belongs to the aconitase/IPM isomerase family. LeuC type 1 subfamily. As to quaternary structure, heterodimer of LeuC and LeuD. The cofactor is [4Fe-4S] cluster.

It carries out the reaction (2R,3S)-3-isopropylmalate = (2S)-2-isopropylmalate. Its pathway is amino-acid biosynthesis; L-leucine biosynthesis; L-leucine from 3-methyl-2-oxobutanoate: step 2/4. Functionally, catalyzes the isomerization between 2-isopropylmalate and 3-isopropylmalate, via the formation of 2-isopropylmaleate. The sequence is that of 3-isopropylmalate dehydratase large subunit from Phenylobacterium zucineum (strain HLK1).